Consider the following 168-residue polypeptide: Xanthine-guanine phosphoribosyltransferase (168 aa).

Residues 46–47 (RG) and 101–109 (DDLVDSGVT) contribute to the 5-phospho-alpha-D-ribose 1-diphosphate site. Residue Asp102 coordinates Mg(2+). Residue Asp105 coordinates guanine. 2 residues coordinate xanthine: Asp105 and Val148. GMP-binding positions include 105 to 109 (DSGVT) and 147 to 148 (WV).

Belongs to the purine/pyrimidine phosphoribosyltransferase family. XGPT subfamily. As to quaternary structure, homotetramer. The cofactor is Mg(2+).

The protein resides in the cell inner membrane. The enzyme catalyses GMP + diphosphate = guanine + 5-phospho-alpha-D-ribose 1-diphosphate. It catalyses the reaction XMP + diphosphate = xanthine + 5-phospho-alpha-D-ribose 1-diphosphate. The catalysed reaction is IMP + diphosphate = hypoxanthine + 5-phospho-alpha-D-ribose 1-diphosphate. It participates in purine metabolism; GMP biosynthesis via salvage pathway; GMP from guanine: step 1/1. The protein operates within purine metabolism; XMP biosynthesis via salvage pathway; XMP from xanthine: step 1/1. Its function is as follows. Purine salvage pathway enzyme that catalyzes the transfer of the ribosyl-5-phosphate group from 5-phospho-alpha-D-ribose 1-diphosphate (PRPP) to the N9 position of the 6-oxopurines guanine and xanthine to form the corresponding ribonucleotides GMP (guanosine 5'-monophosphate) and XMP (xanthosine 5'-monophosphate), with the release of PPi. To a lesser extent, also acts on hypoxanthine. The sequence is that of Xanthine-guanine phosphoribosyltransferase from Gluconobacter oxydans (strain 621H) (Gluconobacter suboxydans).